The primary structure comprises 132 residues: uncharacterized protein (132 aa).

This sequence belongs to the mycobacterial PPE family.

This is an uncharacterized protein from Mycobacterium tuberculosis (strain ATCC 25618 / H37Rv).